A 788-amino-acid polypeptide reads, in one-letter code: Elongator complex protein 2 (788 aa).

8 WD repeats span residues 13–51 (GANK…NKGV), 57–96 (GHEA…HLQC), 102–139 (HYSK…DEFG), 200–243 (GHED…LIDD), 279–318 (GHDD…GIWV), 336–377 (GSSG…ICDQ), 383–422 (GATK…ASGR), and 437–475 (IHGY…AGML). The segment at 490 to 530 (PDSATVPVLGLSNKAGEDDANEDDEEEEGGNKETPDITDPL) is disordered. Phosphoserine is present on Ser492. Residues 507-517 (DDANEDDEEEE) show a composition bias toward acidic residues. WD repeat units follow at residues 556-600 (GHGF…EIKP), 604-643 (FHSL…NTFE), 651-692 (PHTR…ADDY), 699-742 (KHTK…FELI), and 750-788 (TPAD…LAYE).

Belongs to the WD repeat ELP2 family. As to quaternary structure, component of the elongator complex which consists of ELP1/IKI3, ELP2, ELP3, ELP4, ELP5/IKI1 and ELP6. The elongator complex is composed of two copies of the Elp123 subcomplex (composed of ELP1/IKI3, ELP2 and ELP3) and two copies of the Elp456 subcomplex (composed of ELP4, ELP5/IKI1 and ELP6). The Elp123 subcomplex forms a two-lobed scaffold, which binds the Elp456 subcomplex asymmetrically. In the complex, ELP2 interacts with ELP1/IKI3. In each lobe, ELP2 is tightly sandwiched between ELP1/IKI3 and ELP3. The Elp123 subcomplex binds tRNA through ELP1/IKI3 and ELP3 and can bind 2 tRNAs simultaneously. tRNA-binding induces conformational rearrangements which precisely position the targeted anticodon base in the active site. The Elp456 subcomplex binds tRNA and has ATPase activity. Interacts with KTI11/DPH3.

Its subcellular location is the cytoplasm. The protein localises to the nucleus. It participates in tRNA modification; 5-methoxycarbonylmethyl-2-thiouridine-tRNA biosynthesis. Its function is as follows. Component of the elongator complex, a multiprotein complex which is required for multiple tRNA modifications, including mcm5U (5-methoxycarbonylmethyl uridine), mcm5s2U (5-methoxycarbonylmethyl-2-thiouridine), and ncm5U (5-carbamoylmethyl uridine). The elongator complex catalyzes formation of carboxymethyluridine in the wobble base at position 34 in tRNAs. It functions as a gamma-toxin target (TOT); disruption of the complex confers resistance to Kluyveromyces lactis toxin zymocin (pGKL1 killer toxin). May also be involved in sensitivity to Pichia inositovora toxin. ELP2 binds to microtubules. Independently, ELP2 may be involved in polarized exocytosis. The protein is Elongator complex protein 2 (ELP2) of Saccharomyces cerevisiae (strain ATCC 204508 / S288c) (Baker's yeast).